A 486-amino-acid chain; its full sequence is uncharacterized protein (486 aa).

2 consecutive ABC transporter domains span residues 2 to 241 and 249 to 486; these read VEFK…KVFV and FEKD…LLFL. 36–43 contacts ATP; it reads GKNGEGKS.

Belongs to the ABC transporter superfamily.

This is an uncharacterized protein from Borreliella burgdorferi (strain ATCC 35210 / DSM 4680 / CIP 102532 / B31) (Borrelia burgdorferi).